A 795-amino-acid polypeptide reads, in one-letter code: Delta-1-pyrroline-5-carboxylate synthase (795 aa).

Residues 1–361 (MLRHMHRSGV…FFSEVKPAGP (361 aa)) form a glutamate 5-kinase region. Positions 117, 223, and 246 each coordinate substrate. Residues 266 to 267 (SD) and 305 to 311 (LGGMEAK) each bind ATP. 3 positions are modified to N6-succinyllysine: Lys311, Lys347, and Lys550. A gamma-glutamyl phosphate reductase region spans residues 362-795 (TVEQQGEMAR…NLPVPQRNFS (434 aa)).

This sequence in the N-terminal section; belongs to the glutamate 5-kinase family. It in the C-terminal section; belongs to the gamma-glutamyl phosphate reductase family. In terms of assembly, can form homodimers/multimers.

Its subcellular location is the mitochondrion matrix. The catalysed reaction is L-glutamate + ATP = L-glutamyl 5-phosphate + ADP. The enzyme catalyses L-glutamate 5-semialdehyde + phosphate + NADP(+) = L-glutamyl 5-phosphate + NADPH + H(+). The protein operates within amino-acid biosynthesis; L-proline biosynthesis; L-glutamate 5-semialdehyde from L-glutamate: step 1/2. It participates in amino-acid biosynthesis; L-proline biosynthesis; L-glutamate 5-semialdehyde from L-glutamate: step 2/2. Isoform Short: Inhibited by L-ornithine with a Ki of approximately 0.25 mm. Isoform Long: Insensitive to ornithine inhibition. Thus, the two amino acid insert in the long isoform abolishes feedback inhibition of P5CS activity by L-ornithine. In terms of biological role, bifunctional enzyme that converts glutamate to glutamate 5-semialdehyde, an intermediate in the biosynthesis of proline, ornithine and arginine. This is Delta-1-pyrroline-5-carboxylate synthase (Aldh18a1) from Mus musculus (Mouse).